The primary structure comprises 608 residues: Coilin (608 aa).

The tract at residues 134-272 is disordered; the sequence is KETGGYESES…RKKAKRQWLR (139 aa). The segment covering 141–155 has biased composition (acidic residues); sequence SESEEDELEEEAEEF. Over residues 161-179 the composition is skewed to basic residues; the sequence is ASKKRKTSSKNQSTKRKKC. The Nuclear localization signal 1 signature appears at 163-170; it reads KKRKTSSK. Ser-187 carries the post-translational modification Phosphoserine. The span at 211–228 shows a compositional bias: polar residues; it reads DVQSANNDEQNNDSTKPM. A compositionally biased stretch (basic and acidic residues) spans 235–245; sequence SQQEESKEHND. The Nuclear localization signal 2 motif lies at 253 to 260; the sequence is TKKTPSRS. The span at 256–269 shows a compositional bias: basic residues; the sequence is TPSRSARRKKAKRQ. The Tudor; atypical domain occupies 410-510; the sequence is YEQLVAYTGS…LLDVRSVKTS (101 aa). The tract at residues 513–585 is disordered; it reads DSAEVAKSAL…KKGSSSGGSW (73 aa). The segment covering 558–585 has biased composition (low complexity); the sequence is EALSAKKAALSQANNGWNKKGSSSGGSW.

Belongs to the coilin family. As to quaternary structure, homooligomer. Interaction with RNA results in multimerization due to structural alteration in the NOD domain.

Its subcellular location is the nucleus. It localises to the cajal body. Its function is as follows. Probable component of nuclear coiled bodies, also known as Cajal bodies or CBs, which are involved in the modification and assembly of nucleoplasmic snRNPs. Required for CBs formation. Binds snRNAs and non-specific artificial RNA via the N-terminal part of the NOD domain and via the NLS2 region (212-282) of the IDD domain. The two sites are able to function independently and provide effective RNA-binding in a non-cooperative manner. This Arabidopsis thaliana (Mouse-ear cress) protein is Coilin.